A 746-amino-acid polypeptide reads, in one-letter code: F-box only protein 30 (746 aa).

Residues 49 to 110 (EHRLLCPFER…SYSDRKSYES (62 aa)) form a TRAF-type zinc finger. Disordered regions lie at residues 222-241 (MDEE…DQDH) and 247-266 (IGAV…QAEQ). Basic and acidic residues predominate over residues 225 to 241 (ENNKESFQDKNLKDQDH). The segment covering 256–266 (SGTSQNAQAEQ) has biased composition (polar residues). Serine 383 bears the Phosphoserine mark. An F-box domain is found at 611 to 659 (SDHLSSLPFEVLQHIAGFLDGFSLCQLACVSRLMRDVCGSLLQSRGMVI).

Part of a SCF (SKP1-cullin-F-box) protein ligase complex. Interacts with SKP1, CUL1 and RBX1/ROC1. Auto-ubiquitinated. In terms of processing, may be neddylated. Neddylation may be required for E3 ligase activity, since it was observed only after purification with o-phenanthroline.

It participates in protein modification; protein ubiquitination. In terms of biological role, substrate-recognition component of the SCF (SKP1-CUL1-F-box protein)-type E3 ubiquitin ligase complex. Required for muscle atrophy following denervation. The polypeptide is F-box only protein 30 (Fbxo30) (Mus musculus (Mouse)).